We begin with the raw amino-acid sequence, 403 residues long: Argininosuccinate synthase (403 aa).

10 to 18 (AYSGGLDTS) lines the ATP pocket. Tyr-87 is a binding site for L-citrulline. Gly-117 provides a ligand contact to ATP. L-aspartate is bound by residues Thr-119, Asn-123, and Asp-124. Asn-123 lines the L-citrulline pocket. Residues Arg-127, Ser-175, Ser-184, Glu-260, and Tyr-272 each coordinate L-citrulline.

Belongs to the argininosuccinate synthase family. Type 1 subfamily. Homotetramer.

The protein resides in the cytoplasm. The enzyme catalyses L-citrulline + L-aspartate + ATP = 2-(N(omega)-L-arginino)succinate + AMP + diphosphate + H(+). The protein operates within amino-acid biosynthesis; L-arginine biosynthesis; L-arginine from L-ornithine and carbamoyl phosphate: step 2/3. The polypeptide is Argininosuccinate synthase (Bacillus pumilus (strain SAFR-032)).